The following is a 194-amino-acid chain: Imidazoleglycerol-phosphate dehydratase (194 aa).

It belongs to the imidazoleglycerol-phosphate dehydratase family.

Its subcellular location is the cytoplasm. The enzyme catalyses D-erythro-1-(imidazol-4-yl)glycerol 3-phosphate = 3-(imidazol-4-yl)-2-oxopropyl phosphate + H2O. The protein operates within amino-acid biosynthesis; L-histidine biosynthesis; L-histidine from 5-phospho-alpha-D-ribose 1-diphosphate: step 6/9. The polypeptide is Imidazoleglycerol-phosphate dehydratase (Chlorobaculum parvum (strain DSM 263 / NCIMB 8327) (Chlorobium vibrioforme subsp. thiosulfatophilum)).